The sequence spans 176 residues: ATP-dependent protease subunit HslV (176 aa).

T4 is a catalytic residue. Residues G158, C161, and T164 each contribute to the Na(+) site.

It belongs to the peptidase T1B family. HslV subfamily. A double ring-shaped homohexamer of HslV is capped on each side by a ring-shaped HslU homohexamer. The assembly of the HslU/HslV complex is dependent on binding of ATP.

It is found in the cytoplasm. It carries out the reaction ATP-dependent cleavage of peptide bonds with broad specificity.. With respect to regulation, allosterically activated by HslU binding. Functionally, protease subunit of a proteasome-like degradation complex believed to be a general protein degrading machinery. This chain is ATP-dependent protease subunit HslV, found in Rhizobium meliloti (strain 1021) (Ensifer meliloti).